Here is a 290-residue protein sequence, read N- to C-terminus: Diaminopimelate epimerase (290 aa).

Substrate contacts are provided by N17, Q49, and N69. C78 serves as the catalytic Proton donor. Substrate is bound by residues 79–80, N166, N199, and 217–218; these read GN and ER. C226 acts as the Proton acceptor in catalysis. 227–228 provides a ligand contact to substrate; it reads GS.

The protein belongs to the diaminopimelate epimerase family. In terms of assembly, homodimer.

The protein localises to the cytoplasm. It catalyses the reaction (2S,6S)-2,6-diaminopimelate = meso-2,6-diaminopimelate. It participates in amino-acid biosynthesis; L-lysine biosynthesis via DAP pathway; DL-2,6-diaminopimelate from LL-2,6-diaminopimelate: step 1/1. Functionally, catalyzes the stereoinversion of LL-2,6-diaminopimelate (L,L-DAP) to meso-diaminopimelate (meso-DAP), a precursor of L-lysine and an essential component of the bacterial peptidoglycan. This chain is Diaminopimelate epimerase, found in Nitrobacter hamburgensis (strain DSM 10229 / NCIMB 13809 / X14).